A 352-amino-acid chain; its full sequence is Holliday junction branch migration complex subunit RuvB (352 aa).

A large ATPase domain (RuvB-L) region spans residues 13–201; sequence IPRSRKELRL…FGLCHKIEFY (189 aa). Residues L37, R41, G82, K85, T86, T87, 148–150, R191, Y201, and R238 contribute to the ATP site; that span reads EDF. T86 serves as a coordination point for Mg(2+). The interval 202 to 273 is small ATPAse domain (RuvB-S); it reads SNDELKQIIF…IIEKALDSQK (72 aa). The head domain (RuvB-H) stretch occupies residues 276–352; it reads NRGLDNVDRK…KYISSNNEKY (77 aa). DNA is bound by residues R330 and R335.

The protein belongs to the RuvB family. As to quaternary structure, homohexamer. Forms an RuvA(8)-RuvB(12)-Holliday junction (HJ) complex. HJ DNA is sandwiched between 2 RuvA tetramers; dsDNA enters through RuvA and exits via RuvB. An RuvB hexamer assembles on each DNA strand where it exits the tetramer. Each RuvB hexamer is contacted by two RuvA subunits (via domain III) on 2 adjacent RuvB subunits; this complex drives branch migration. In the full resolvosome a probable DNA-RuvA(4)-RuvB(12)-RuvC(2) complex forms which resolves the HJ.

It localises to the cytoplasm. It carries out the reaction ATP + H2O = ADP + phosphate + H(+). Its function is as follows. The RuvA-RuvB-RuvC complex processes Holliday junction (HJ) DNA during genetic recombination and DNA repair, while the RuvA-RuvB complex plays an important role in the rescue of blocked DNA replication forks via replication fork reversal (RFR). RuvA specifically binds to HJ cruciform DNA, conferring on it an open structure. The RuvB hexamer acts as an ATP-dependent pump, pulling dsDNA into and through the RuvAB complex. RuvB forms 2 homohexamers on either side of HJ DNA bound by 1 or 2 RuvA tetramers; 4 subunits per hexamer contact DNA at a time. Coordinated motions by a converter formed by DNA-disengaged RuvB subunits stimulates ATP hydrolysis and nucleotide exchange. Immobilization of the converter enables RuvB to convert the ATP-contained energy into a lever motion, pulling 2 nucleotides of DNA out of the RuvA tetramer per ATP hydrolyzed, thus driving DNA branch migration. The RuvB motors rotate together with the DNA substrate, which together with the progressing nucleotide cycle form the mechanistic basis for DNA recombination by continuous HJ branch migration. Branch migration allows RuvC to scan DNA until it finds its consensus sequence, where it cleaves and resolves cruciform DNA. The sequence is that of Holliday junction branch migration complex subunit RuvB from Prochlorococcus marinus (strain MIT 9515).